We begin with the raw amino-acid sequence, 189 residues long: 2-oxoglutarate synthase subunit KorC (189 aa).

Heterotetramer of the KorA, KorB, KorC and KorD subunits.

It carries out the reaction 2 oxidized [2Fe-2S]-[ferredoxin] + 2-oxoglutarate + CoA = succinyl-CoA + 2 reduced [2Fe-2S]-[ferredoxin] + CO2 + H(+). This chain is 2-oxoglutarate synthase subunit KorC (korC), found in Methanothermobacter thermautotrophicus (strain ATCC 29096 / DSM 1053 / JCM 10044 / NBRC 100330 / Delta H) (Methanobacterium thermoautotrophicum).